A 171-amino-acid polypeptide reads, in one-letter code: Ribosome-binding factor A (171 aa).

Residues 126-138 (VREGAKHAGDADP) are compositionally biased toward basic and acidic residues. The interval 126–171 (VREGAKHAGDADPYRVSGVEEEAGGSGEVQAEFDAEDTGDRNRQDD) is disordered.

Belongs to the RbfA family. In terms of assembly, monomer. Binds 30S ribosomal subunits, but not 50S ribosomal subunits or 70S ribosomes.

The protein localises to the cytoplasm. Its function is as follows. One of several proteins that assist in the late maturation steps of the functional core of the 30S ribosomal subunit. Associates with free 30S ribosomal subunits (but not with 30S subunits that are part of 70S ribosomes or polysomes). Required for efficient processing of 16S rRNA. May interact with the 5'-terminal helix region of 16S rRNA. This chain is Ribosome-binding factor A, found in Mycobacterium sp. (strain JLS).